The sequence spans 100 residues: UPF0213 protein YhbQ (100 aa).

The region spanning 2-77 (TPWFLYLIRT…KQLTKRQKER (76 aa)) is the GIY-YIG domain.

The protein belongs to the UPF0213 family.

The chain is UPF0213 protein YhbQ from Shigella dysenteriae serotype 1 (strain Sd197).